A 90-amino-acid polypeptide reads, in one-letter code: UPF0335 protein RPD_1405 (90 aa).

Belongs to the UPF0335 family.

In Rhodopseudomonas palustris (strain BisB5), this protein is UPF0335 protein RPD_1405.